The sequence spans 429 residues: Chaperone SurA (429 aa).

Residues 1 to 18 (MFKRIALVCALFSGVCFA) form the signal peptide. 2 consecutive PpiC domains span residues 170–271 (NLTY…KLVA) and 281–380 (ITQT…EVIA).

It is found in the periplasm. The enzyme catalyses [protein]-peptidylproline (omega=180) = [protein]-peptidylproline (omega=0). In terms of biological role, chaperone involved in the correct folding and assembly of outer membrane proteins. Recognizes specific patterns of aromatic residues and the orientation of their side chains, which are found more frequently in integral outer membrane proteins. May act in both early periplasmic and late outer membrane-associated steps of protein maturation. This is Chaperone SurA from Legionella pneumophila subsp. pneumophila (strain Philadelphia 1 / ATCC 33152 / DSM 7513).